The sequence spans 141 residues: Nucleoside diphosphate kinase (141 aa).

ATP is bound by residues lysine 11, phenylalanine 59, arginine 87, threonine 93, arginine 104, and asparagine 114. Histidine 117 functions as the Pros-phosphohistidine intermediate in the catalytic mechanism.

The protein belongs to the NDK family. In terms of assembly, homotetramer. Mg(2+) serves as cofactor.

It is found in the cytoplasm. The enzyme catalyses a 2'-deoxyribonucleoside 5'-diphosphate + ATP = a 2'-deoxyribonucleoside 5'-triphosphate + ADP. It catalyses the reaction a ribonucleoside 5'-diphosphate + ATP = a ribonucleoside 5'-triphosphate + ADP. Its function is as follows. Major role in the synthesis of nucleoside triphosphates other than ATP. The ATP gamma phosphate is transferred to the NDP beta phosphate via a ping-pong mechanism, using a phosphorylated active-site intermediate. The polypeptide is Nucleoside diphosphate kinase (Vibrio parahaemolyticus serotype O3:K6 (strain RIMD 2210633)).